Consider the following 402-residue polypeptide: mRNA-capping enzyme subunit alpha (402 aa).

K67 (N6-GMP-lysine intermediate) is an active-site residue. The segment at 374–402 (SVTKRKLDETSNDDAPAIKKVAKESEKEI) is disordered.

The protein belongs to the eukaryotic GTase family. In terms of assembly, heterodimer. The mRNA-capping enzyme is composed of two separate chains alpha and beta, respectively a mRNA guanylyltransferase and an mRNA 5'-triphosphate monophosphatase.

It is found in the nucleus. It catalyses the reaction a 5'-end diphospho-ribonucleoside in mRNA + GTP + H(+) = a 5'-end (5'-triphosphoguanosine)-ribonucleoside in mRNA + diphosphate. Its function is as follows. Second step of mRNA capping. Transfer of the GMP moiety of GTP to the 5'-end of RNA via an enzyme-GMP covalent reaction intermediate. The chain is mRNA-capping enzyme subunit alpha (ceg1) from Schizosaccharomyces pombe (strain 972 / ATCC 24843) (Fission yeast).